A 442-amino-acid chain; its full sequence is Trigger factor (442 aa).

Residues 162–247 (GDRMTFDFEG…VKAIESRELP (86 aa)) form the PPIase FKBP-type domain.

This sequence belongs to the FKBP-type PPIase family. Tig subfamily.

Its subcellular location is the cytoplasm. The catalysed reaction is [protein]-peptidylproline (omega=180) = [protein]-peptidylproline (omega=0). In terms of biological role, involved in protein export. Acts as a chaperone by maintaining the newly synthesized protein in an open conformation. Functions as a peptidyl-prolyl cis-trans isomerase. The polypeptide is Trigger factor (Magnetococcus marinus (strain ATCC BAA-1437 / JCM 17883 / MC-1)).